The primary structure comprises 271 residues: Orotidine 5'-phosphate decarboxylase (271 aa).

Residue K97 is the Proton donor of the active site.

This sequence belongs to the OMP decarboxylase family. Type 2 subfamily.

The enzyme catalyses orotidine 5'-phosphate + H(+) = UMP + CO2. The protein operates within pyrimidine metabolism; UMP biosynthesis via de novo pathway; UMP from orotate: step 2/2. This chain is Orotidine 5'-phosphate decarboxylase, found in Leptospira borgpetersenii serovar Hardjo-bovis (strain L550).